The following is a 102-amino-acid chain: NADH-quinone oxidoreductase subunit K (102 aa).

3 consecutive transmembrane segments (helical) span residues 5–25 (ITHY…GIFL), 31–51 (IIIL…FVAF), and 66–86 (FVLT…VVFF).

The protein belongs to the complex I subunit 4L family. In terms of assembly, NDH-1 is composed of 14 different subunits. Subunits NuoA, H, J, K, L, M, N constitute the membrane sector of the complex.

It localises to the cell inner membrane. The catalysed reaction is a quinone + NADH + 5 H(+)(in) = a quinol + NAD(+) + 4 H(+)(out). NDH-1 shuttles electrons from NADH, via FMN and iron-sulfur (Fe-S) centers, to quinones in the respiratory chain. The immediate electron acceptor for the enzyme in this species is believed to be ubiquinone. Couples the redox reaction to proton translocation (for every two electrons transferred, four hydrogen ions are translocated across the cytoplasmic membrane), and thus conserves the redox energy in a proton gradient. In Bartonella grahamii (strain as4aup), this protein is NADH-quinone oxidoreductase subunit K.